A 567-amino-acid chain; its full sequence is MVISTNELAALTVVLLATGVLFYANSTRRAPLPPGPRGLPLLGNLFQFDVMRPYPQYLKWAQKYGPVFSVKLGGQRIIVLNSSEAADELLATRSKLYSSRESPHVGFDLVSDQQRMLFMPYGREWKIARKNVHSLLGPGPSKQMGKTQDLESRVMLHDLLCHGETSITEEFVEGPRGEVPERHWFSIVRRYTTSVVMMLVYGRRIHRIVGNPELHKVYDLMSNFTHVSQPGRYMVDALPVLRWLPDMLAPWRAEGRKMHKREMDFWGKLFSDSRTAFLNGTGLNGFVQSYLRARTEAGLEDLPGNGATEDAAGWMRDKLITYTAVTIVEAGSDTTSTGVFSFVLLMLSNPDALQRAKEEMDAVVGSSRMPDWEDEDRLPWLTACIKETLRRAPPAPLGIPHKVDEDDVYNGYLIPKGSTVIGNIWAIHMDPVRYPDPTAFKPERFYNPDGKLNWASGPDAHNRDHYIFGWGRRFCSGKYLAEASMFIVLSRLIWGFDFYAASDPQTGKARLPDVSDVDTFTDGLVTAPKIYPVGFKPRSEKHAEMIKASYRDVQNDWQSMGLAGDER.

The chain crosses the membrane as a helical span at residues 7–24; the sequence is ELAALTVVLLATGVLFYA. 4 N-linked (GlcNAc...) asparagine glycosylation sites follow: asparagine 25, asparagine 81, asparagine 223, and asparagine 279. Residue cysteine 475 coordinates heme.

It belongs to the cytochrome P450 family. Heme is required as a cofactor.

It localises to the membrane. Its pathway is secondary metabolite biosynthesis. Cytochrome P450 monooxygenase that is able to use 4-ethoxybenzoic acid as a substrate for oxidation. This chain is Cytochrome P450 monooxygenase 69, found in Postia placenta (strain ATCC 44394 / Madison 698-R) (Brown rot fungus).